The sequence spans 92 residues: Small ribosomal subunit protein bS18 (92 aa).

It belongs to the bacterial ribosomal protein bS18 family. Part of the 30S ribosomal subunit. Forms a tight heterodimer with protein bS6.

Binds as a heterodimer with protein bS6 to the central domain of the 16S rRNA, where it helps stabilize the platform of the 30S subunit. This is Small ribosomal subunit protein bS18 from Chlorobium chlorochromatii (strain CaD3).